Here is a 348-residue protein sequence, read N- to C-terminus: Sulfate/thiosulfate import ATP-binding protein CysA (348 aa).

The ABC transporter domain occupies 3–233; sequence ILIDNISKKF…PATPFVFSLL (231 aa). 35–42 is an ATP binding site; that stretch reads GPSGSGKS.

Belongs to the ABC transporter superfamily. Sulfate/tungstate importer (TC 3.A.1.6) family.

It is found in the plastid. Its subcellular location is the chloroplast. It carries out the reaction sulfate(out) + ATP + H2O = sulfate(in) + ADP + phosphate + H(+). The catalysed reaction is thiosulfate(out) + ATP + H2O = thiosulfate(in) + ADP + phosphate + H(+). Its function is as follows. Part of the ABC transporter complex involved in sulfate/thiosulfate import. Responsible for energy coupling to the transport system. The polypeptide is Sulfate/thiosulfate import ATP-binding protein CysA (Mesostigma viride (Green alga)).